A 143-amino-acid chain; its full sequence is MAKKKAISWIKLQVPAAQAAPGAKIGQALGPHGVSGPQFVKEFNERTAKMDPGIVVPVIITVYSDKSFSFIVKTPPASILIKKTIGIESGSKKSNTDKVGTISKEKLMEIVKIKMPDLNAKSESAAFKIISGSARSMGVEVEK.

The protein belongs to the universal ribosomal protein uL11 family. In terms of assembly, part of the ribosomal stalk of the 50S ribosomal subunit. Interacts with L10 and the large rRNA to form the base of the stalk. L10 forms an elongated spine to which L12 dimers bind in a sequential fashion forming a multimeric L10(L12)X complex. One or more lysine residues are methylated.

Functionally, forms part of the ribosomal stalk which helps the ribosome interact with GTP-bound translation factors. The protein is Large ribosomal subunit protein uL11 of Borrelia garinii subsp. bavariensis (strain ATCC BAA-2496 / DSM 23469 / PBi) (Borreliella bavariensis).